A 167-amino-acid chain; its full sequence is Small ribosomal subunit protein uS5 (167 aa).

In terms of domain architecture, S5 DRBM spans 12 to 75; sequence LQEKLIAVNR…EKARRNIVTV (64 aa).

This sequence belongs to the universal ribosomal protein uS5 family. As to quaternary structure, part of the 30S ribosomal subunit. Contacts proteins S4 and S8.

With S4 and S12 plays an important role in translational accuracy. Its function is as follows. Located at the back of the 30S subunit body where it stabilizes the conformation of the head with respect to the body. The chain is Small ribosomal subunit protein uS5 from Shewanella baltica (strain OS223).